The following is a 183-amino-acid chain: Glutathione-regulated potassium-efflux system ancillary protein KefG (183 aa).

It belongs to the NAD(P)H dehydrogenase (quinone) family. KefG subfamily. Interacts with KefB.

The protein resides in the cell inner membrane. It carries out the reaction a quinone + NADH + H(+) = a quinol + NAD(+). The catalysed reaction is a quinone + NADPH + H(+) = a quinol + NADP(+). Functionally, regulatory subunit of a potassium efflux system that confers protection against electrophiles. Required for full activity of KefB. The polypeptide is Glutathione-regulated potassium-efflux system ancillary protein KefG (Yersinia pestis bv. Antiqua (strain Angola)).